The chain runs to 124 residues: uncharacterized protein (124 aa).

Disordered stretches follow at residues 1–31 and 59–124; these read MAQHAFQDQEQEEGRNSRQQKRKSFEDTMKP and EDAR…YPQP. Polar residues-rich tracts occupy residues 65-86 and 98-124; these read GMSSVTPTSSASKIGTKTSDAA and TGEQPSGIQAQNLRGQSSDQSACYPQP.

This is an uncharacterized protein from Bos taurus (Bovine).